Consider the following 602-residue polypeptide: MDKGRERMAAAAAAAAAAAAAAQCRSPRCAAERRGFRRELDSWRHRLMHCVGFESILEGLYGPRLRRDLSLFEDCEPEELTDWSMDEKCSFCNLQREAVSDCIPSLDSSQSTPTEELSSQGQSNTDKIECQAENYLNALFRKKDLPQNCDPNIPLVAQELMKKMIRQFAIEYISKSGKTQENRNGSIGPSIVCKSIQMNQAENSLQEEQEGPLDLTVNRMQEQNTQQGDGVLDLSTKKTSIKSEESSICDPSSENSVAGRLHRNREDYVERSAEFADGLLSKALKDIQSGALDINKAGILYGIPQKTLLLHLEALPAGKPASFKNKTRDFHDSYSYKDSKETCAVLQKVALWARAQAERTEKSKLNLLETSEIKFPTASTYLHQLTLQKMVTQFKEKNESLQYETSNPTVQLKIPQLRVSSVSKSQPDGSGLLDVMYQVSKTSSVLEGSALQKLKNILPKQNKIECSGPVTHSSVDSYFLHGDLSPLCLNSKNGTVDGTSENTEDGLDRKDSKQPRKKRGRYRQYDHEIMEEAIAMVMSGKMSVSKAQGIYGVPHSTLEYKVKERSGTLKTPPKKKLRLPDTGLYNMTDSGTGSCKNSSKPV.

Residues 104 to 124 (PSLDSSQSTPTEELSSQGQSN) are disordered. Polar residues predominate over residues 106 to 124 (LDSSQSTPTEELSSQGQSN). Residues Lys-242, Lys-319, Lys-340, and Lys-397 each participate in a glycyl lysine isopeptide (Lys-Gly) (interchain with G-Cter in SUMO2) cross-link. 2 disordered regions span residues 495–521 (TVDG…KRGR) and 564–602 (ERSG…SKPV). One can recognise an HTH psq-type domain in the interval 516–568 (RKKRGRYRQYDHEIMEEAIAMVMSGKMSVSKAQGIYGVPHSTLEYKVKERSGT). Positions 544–564 (VSKAQGIYGVPHSTLEYKVKE) form a DNA-binding region, H-T-H motif. The segment covering 585 to 602 (YNMTDSGTGSCKNSSKPV) has biased composition (polar residues).

The protein resides in the nucleus. In terms of biological role, may act as transcription activator that binds DNA elements with the sequence 5'-CCCTATCGATCGATCTCTACCT-3'. May play a role in spermatogenesis. This chain is Ligand-dependent nuclear receptor corepressor-like protein (LCORL), found in Homo sapiens (Human).